The primary structure comprises 314 residues: Olfactory receptor 5D13 (314 aa).

At 1–27 (MMASERNQSSTPTFILLGFSEYPEIQV) the chain is on the extracellular side. N-linked (GlcNAc...) asparagine glycosylation occurs at asparagine 7. A helical transmembrane segment spans residues 28 to 48 (PLFLVFLFVYTVTVVGNLGMI). Topologically, residues 49–56 (IIIRLNSK) are cytoplasmic. Residues 57–77 (LHTIMCFFLSHLSLTDFCFST) traverse the membrane as a helical segment. At 78-101 (VVTPKLLENLVVEYRTISFSGCIM) the chain is on the extracellular side. A helical membrane pass occupies residues 102 to 122 (QFCFACIFGVTETFMLAAMAY). The Cytoplasmic portion of the chain corresponds to 123–141 (DRFVAVCKPLLYTTIMSQK). The chain crosses the membrane as a helical span at residues 142–162 (LCALLVAGSYTWGIVCSLILT). The Extracellular portion of the chain corresponds to 163 to 198 (YFLLDLSFCESTFINNFICDHSVIVSASYSDPYISQ). Residues 199-219 (RLCFIIAIFNEVSSLIIILTS) traverse the membrane as a helical segment. The Cytoplasmic portion of the chain corresponds to 220 to 239 (YMLIFTTIMKMRSASGRQKT). A helical membrane pass occupies residues 240 to 260 (FSTCASHLTAITIFHGTILFL). Residues 261–273 (YCVPNPKTSSLIV) are Extracellular-facing. A helical transmembrane segment spans residues 274-294 (TVASVFYTVAIPMLNPLIYSL). The Cytoplasmic portion of the chain corresponds to 295–314 (RNKDINNMFEKLVVTKLIYH).

This sequence belongs to the G-protein coupled receptor 1 family.

It localises to the cell membrane. Odorant receptor. This is Olfactory receptor 5D13 (OR5D13) from Homo sapiens (Human).